A 431-amino-acid chain; its full sequence is Beta-1,4-glucuronyltransferase 1 (431 aa).

The Cytoplasmic segment spans residues 1-11 (MHFSKKCSVFK). A helical transmembrane segment spans residues 12 to 32 (VVLSALLIVALLQLLYLSFLS). Residues 33–431 (KLHGKQQRYK…AKYPTSPRRC (399 aa)) lie on the Lumenal side of the membrane. Asn-216 carries N-linked (GlcNAc...) asparagine glycosylation. 2 residues coordinate Mn(2+): Asp-241 and Asp-243. A glycan (N-linked (GlcNAc...) asparagine) is linked at Asn-314.

Belongs to the glycosyltransferase 49 family. The cofactor is Mn(2+).

It localises to the golgi apparatus membrane. The catalysed reaction is 3-O-[beta-D-Xyl-(1-&gt;4)-Rib-ol-P-Rib-ol-P-3-beta-D-GalNAc-(1-&gt;3)-beta-D-GlcNAc-(1-&gt;4)-(O-6-P-alpha-D-Man)]-Thr-[protein] + UDP-alpha-D-glucuronate = 3-O-[beta-D-GlcA-(1-&gt;3)-beta-D-Xyl-(1-&gt;4)-Rib-ol-P-Rib-ol-P-3-beta-D-GalNAc-(1-&gt;3)-beta-D-GlcNAc-(1-&gt;4)-(O-6-P-alpha-D-Man)]-Thr-[protein] + UDP + H(+). It participates in protein modification; protein glycosylation. In terms of biological role, beta-1,4-glucuronyltransferase involved in O-mannosylation of alpha-dystroglycan (DAG1). Transfers a glucuronic acid (GlcA) residue onto a xylose (Xyl) acceptor to produce the glucuronyl-beta-1,4-xylose-beta disaccharide primer, which is further elongated by LARGE, during synthesis of phosphorylated O-mannosyl glycan. Phosphorylated O-mannosyl glycan is a carbohydrate structure present in alpha-dystroglycan (DAG1), which is required for binding laminin G-like domain-containing extracellular proteins with high affinity. Required for axon guidance; via its function in O-mannosylation of alpha-dystroglycan (DAG1). The chain is Beta-1,4-glucuronyltransferase 1 from Danio rerio (Zebrafish).